We begin with the raw amino-acid sequence, 367 residues long: Alginate lyase (367 aa).

A signal peptide spans 1 to 24; the sequence is MTIINRKTAPALLALALFGGAAQA. Residues 63–64, 136–137, and Y254 each bind substrate; these read SK and HT.

It belongs to the polysaccharide lyase 5 family.

It is found in the periplasm. The catalysed reaction is Eliminative cleavage of alginate to give oligosaccharides with 4-deoxy-alpha-L-erythro-hex-4-enuronosyl groups at their non-reducing ends and beta-D-mannuronate at their reducing end.. Its function is as follows. Catalyzes the depolymerization of alginate by cleaving the beta-1,4 glycosidic bond between two adjacent sugar residues via a beta-elimination mechanism. May serve to degrade mislocalized alginate that is trapped in the periplasmic space. The protein is Alginate lyase of Pseudomonas entomophila (strain L48).